The primary structure comprises 239 residues: Fatty acid metabolism regulator protein (239 aa).

Positions 6–74 constitute an HTH gntR-type domain; the sequence is QSPAGFAEEY…HGKPTKVNNF (69 aa). The H-T-H motif DNA-binding region spans 34–53; sequence ERELSELIGVTRTTLREVLQ.

As to quaternary structure, homodimer.

The protein resides in the cytoplasm. Functionally, multifunctional regulator of fatty acid metabolism. The sequence is that of Fatty acid metabolism regulator protein from Yersinia enterocolitica serotype O:8 / biotype 1B (strain NCTC 13174 / 8081).